A 99-amino-acid chain; its full sequence is MKGTFSKGFVPPRRFTRLHPLRMRQREQQPRLRTEVQRISALQHQVQVRVRVQVQVQVRVQVRVQVRVQVRVRVQGRGQCHWYRRRRPWFPSRLCLCLP.

The protein is Duplicate procyclin of Trypanosoma brucei brucei.